Consider the following 602-residue polypeptide: Protein DGS1, mitochondrial (602 aa).

2 helical membrane-spanning segments follow: residues 300–320 and 465–485; these read LYWV…IWLL and INFA…MLTV.

As to quaternary structure, component of a mitochondrial large protein complex that contains, at least, MIC60, DGS1, TOM40 (e.g. TOM40-1), TOM20 proteins (e.g. TOM20-2), and petC/RISP.

The protein resides in the mitochondrion outer membrane. Functionally, involved in galactoglycerolipid biosynthesis. Contributes to an intracellular signal that regulates an alternative DGD1-independent galactoglycerolipid biosynthesis pathway in chloroplasts. Being involved in mitochondrial lipid homeostasis, modulates mitochondrion biogenesis and physiology, as well as stress responses. The sequence is that of Protein DGS1, mitochondrial from Arabidopsis thaliana (Mouse-ear cress).